We begin with the raw amino-acid sequence, 437 residues long: (S)-6-hydroxynicotine oxidase (437 aa).

FAD is bound by residues Ser16, 35 to 37 (EAR), Arg43, 57 to 60 (GGAG), Val231, Ser405, and 413 to 415 (EYI).

Belongs to the flavin monoamine oxidase family. As to quaternary structure, homodimer. It depends on FAD as a cofactor.

It carries out the reaction (S)-6-hydroxynicotine + O2 + H2O = 6-hydroxypseudooxynicotine + H2O2. It catalyses the reaction (S)-6-hydroxynicotine + O2 = 6-hydroxy-N-methylmyosmine + H2O2. It functions in the pathway alkaloid degradation; nicotine degradation; 6-hydroxypseudooxynicotine from nicotine (S-isomer route): step 2/2. Its activity is regulated as follows. Partially inhibited by Co(2+) or Zn(2+) and significantly inhibited by Ag(+), Cu(2+) and Hg(2+). In terms of biological role, involved in the degradation of L-nicotine. Catalyzes the oxidation of (S)-6-hydroxynicotine (6-hydroxy-L-nicotine) to 6-hydroxypseudooxynicotine. Oxidation of the pyrrolidine ring of (S)-6-hydroxynicotine leads to the formation of the optically inactive 6-hydroxy-N-methylmyosmine, which hydrolyzes spontaneously to 6-hydroxypseudooxynicotine. Acts with absolute stereospecificity on the L-form of 6-hydroxynicotine. Also involved in the degradation of nornicotine, and catalyzes the oxidation of 6-hydroxynornicotine to 6-hydroxymyosmine, which hydrolyzes to 6-hydroxypseudooxynornicotine. In vitro, converts (S)-nicotine into N-methylmyosmine, which spontaneously hydrolyzes spontaneously into pseudooxynicotine, but catalytic efficiency is about 1900-fold higher with (S)-6-hydroxynicotine. The chain is (S)-6-hydroxynicotine oxidase from Shinella sp. (strain HZN7).